Here is a 197-residue protein sequence, read N- to C-terminus: Putative glutathione-dependent formaldehyde-activating enzyme (197 aa).

Residues Phe22–Asp171 form the CENP-V/GFA domain. Residues Cys29, Cys31, Cys50, Cys52, Cys55, Cys97, and Cys100 each coordinate Zn(2+).

This sequence belongs to the Gfa family. Zn(2+) is required as a cofactor.

It catalyses the reaction S-(hydroxymethyl)glutathione = glutathione + formaldehyde. It functions in the pathway one-carbon metabolism; formaldehyde degradation; formate from formaldehyde (glutathione route): step 1/3. In terms of biological role, catalyzes the condensation of formaldehyde and glutathione to S-hydroxymethylglutathione. The polypeptide is Putative glutathione-dependent formaldehyde-activating enzyme (Emericella nidulans (strain FGSC A4 / ATCC 38163 / CBS 112.46 / NRRL 194 / M139) (Aspergillus nidulans)).